The chain runs to 57 residues: Small hydrophobic protein (57 aa).

Residues 1–8 (MPAIQPPL) lie on the Virion surface side of the membrane. Residues 9-29 (YLTFLLLILLYRIITLYVWVV) traverse the membrane as a helical segment. Residues 30–57 (STITYKTAVRHAALYQRSLFRWSFDHSL) are Intravirion-facing.

The protein belongs to the rubulavirus small hydrophobic protein family. As to quaternary structure, interacts with host TNFRSF1A, RIPK1 and IRAK1; these interactions interfere with host NF-kappa-B activation at the level of receptor complexes. Interacts with host protein UBQLN4.

It is found in the virion membrane. The protein resides in the host cell membrane. Plays a role in the inhibition of the host NF-kappa-B pathway. This inhibition occurs at the receptor level, by preventing the signaling of TNFR1 as well as IL-1R and TLR3. The polypeptide is Small hydrophobic protein (SH) (Mumps virus (strain Belfast) (MuV)).